A 327-amino-acid chain; its full sequence is Malate dehydrogenase (327 aa).

Residue 12 to 18 participates in NAD(+) binding; it reads GAAGQIG. Arg-93 and Arg-99 together coordinate substrate. NAD(+)-binding positions include Asn-106, Gln-113, and 130 to 132; that span reads VGN. Residues Asn-132 and Arg-163 each contribute to the substrate site. Residue His-188 is the Proton acceptor of the active site.

This sequence belongs to the LDH/MDH superfamily. MDH type 2 family.

The catalysed reaction is (S)-malate + NAD(+) = oxaloacetate + NADH + H(+). Its function is as follows. Catalyzes the reversible oxidation of malate to oxaloacetate. In Cupriavidus metallidurans (strain ATCC 43123 / DSM 2839 / NBRC 102507 / CH34) (Ralstonia metallidurans), this protein is Malate dehydrogenase.